The following is a 573-amino-acid chain: MTELSRARYAELFGPTTGDRIRLADTDLLIEITEDRSGGPGLAGDEAVFGGGKVLRESMGQSRATRADGAPDTVITGAVIVDHWGIVKADIGIRDGRICGIGKAGNPDTMSGVHPDLVVGPSTEIIAGNGRILTAGAIDCHVHFICPQLMDEALGGGITTLIGGGTGPAEGSKATTVTPGAWHLARMLEATDHWPLNIALLGKGNTVSEAAMWEQLRAGASGFKLHEDWGSTPAAIDACLRVADASGVQVALHSDTLNEAGFVEDTLAAIAGRGIHAYHTEGAGGGHAPDIITVAAHPNVLPSSTNPTRPHTVNTLDEHLDMLMVCHHLSPSIPEDLAFAESRIRPSTIAAEDLLHDLGAISMIGSDSQAMGRIGEVVMRTWQTAHVMKRRRGALPGDGAADNARVRRYIAKYTICPAVAHGLDAEIGSVEVGKLADLVLWDPAFFGVRPHAVLKGGAIAWAAMGDANASIPTPQPVLPRPMFGAAAPVAAATSLHFVSEHALADGLAERLAVRRKLVAVKDVRRLTKTDMPLNDAMPRIEVDPDTFTVRVDGEVWAEQPATELPMAQRYFLF.

One can recognise a Urease domain in the interval 136 to 573 (GAIDCHVHFI…LPMAQRYFLF (438 aa)). Ni(2+) is bound by residues His141, His143, and Lys224. An N6-carboxylysine modification is found at Lys224. A substrate-binding site is contributed by His226. Ni(2+) contacts are provided by His253 and His279. His327 (proton donor) is an active-site residue. Asp367 contributes to the Ni(2+) binding site.

This sequence belongs to the metallo-dependent hydrolases superfamily. Urease alpha subunit family. In terms of assembly, heterotrimer of UreA (gamma), UreB (beta) and UreC (alpha) subunits. Three heterotrimers associate to form the active enzyme. Ni cation is required as a cofactor. Carboxylation allows a single lysine to coordinate two nickel ions.

It localises to the cytoplasm. It catalyses the reaction urea + 2 H2O + H(+) = hydrogencarbonate + 2 NH4(+). It functions in the pathway nitrogen metabolism; urea degradation; CO(2) and NH(3) from urea (urease route): step 1/1. The polypeptide is Urease subunit alpha (Nocardia farcinica (strain IFM 10152)).